A 453-amino-acid polypeptide reads, in one-letter code: Bifunctional protein GlmU (453 aa).

The pyrophosphorylase stretch occupies residues 1–227; that stretch reads MAVSVIILAA…SIEVMGVNDR (227 aa). Residues 8-11, lysine 22, glutamine 73, 78-79, 100-102, glycine 137, glutamate 152, asparagine 167, and asparagine 225 contribute to the UDP-N-acetyl-alpha-D-glucosamine site; these read LAAG, GT, and SGD. Aspartate 102 provides a ligand contact to Mg(2+). Position 225 (asparagine 225) interacts with Mg(2+). The segment at 228–248 is linker; that stretch reads QQLAYLERFYQKREAARLMGE. Positions 249-453 are N-acetyltransferase; it reads GVSLSDPDRF…WPGWKRPSKK (205 aa). UDP-N-acetyl-alpha-D-glucosamine-binding residues include arginine 331 and lysine 349. Histidine 361 functions as the Proton acceptor in the catalytic mechanism. Positions 364 and 375 each coordinate UDP-N-acetyl-alpha-D-glucosamine. Acetyl-CoA contacts are provided by residues alanine 378, 384-385, serine 403, alanine 421, and arginine 438; that span reads NY. Residues 430–453 are disordered; it reads PPGELTLSRTPQKSWPGWKRPSKK.

The protein in the N-terminal section; belongs to the N-acetylglucosamine-1-phosphate uridyltransferase family. It in the C-terminal section; belongs to the transferase hexapeptide repeat family. Homotrimer. Mg(2+) serves as cofactor.

Its subcellular location is the cytoplasm. It carries out the reaction alpha-D-glucosamine 1-phosphate + acetyl-CoA = N-acetyl-alpha-D-glucosamine 1-phosphate + CoA + H(+). The enzyme catalyses N-acetyl-alpha-D-glucosamine 1-phosphate + UTP + H(+) = UDP-N-acetyl-alpha-D-glucosamine + diphosphate. It functions in the pathway nucleotide-sugar biosynthesis; UDP-N-acetyl-alpha-D-glucosamine biosynthesis; N-acetyl-alpha-D-glucosamine 1-phosphate from alpha-D-glucosamine 6-phosphate (route II): step 2/2. Its pathway is nucleotide-sugar biosynthesis; UDP-N-acetyl-alpha-D-glucosamine biosynthesis; UDP-N-acetyl-alpha-D-glucosamine from N-acetyl-alpha-D-glucosamine 1-phosphate: step 1/1. The protein operates within bacterial outer membrane biogenesis; LPS lipid A biosynthesis. In terms of biological role, catalyzes the last two sequential reactions in the de novo biosynthetic pathway for UDP-N-acetylglucosamine (UDP-GlcNAc). The C-terminal domain catalyzes the transfer of acetyl group from acetyl coenzyme A to glucosamine-1-phosphate (GlcN-1-P) to produce N-acetylglucosamine-1-phosphate (GlcNAc-1-P), which is converted into UDP-GlcNAc by the transfer of uridine 5-monophosphate (from uridine 5-triphosphate), a reaction catalyzed by the N-terminal domain. The chain is Bifunctional protein GlmU from Nitrosococcus oceani (strain ATCC 19707 / BCRC 17464 / JCM 30415 / NCIMB 11848 / C-107).